Reading from the N-terminus, the 444-residue chain is MKAFMLAGVSSGIGKTTISMALMSVFNNVSPFKVGPDYIDPGFHEFITGNKSYNLDIFMMGEQGVKYSFYKHHKDISIIEGVMGLYDGMDNSLDNNSSAHIARFLGVPVILVLDGVGKSTSIAAQVLGYKMLDPRVNISGVIINKVSSAKTYAIFKEAIEKYTGVKCLGFVEKNDKLNISSQHLGLLQASEVEDLREKLSILKNLVLQNIDLKEIEKIASEQTRTFNENETEIEPPLYISYLKDRYVGKIIAIAQDRAFSFYYNDNIEFLEYMGFKVKYFSPLKDSKVPECDIIYLGGGYPENFAEELSNNKEMFNSIRKNYEQGKNILAECGGFMYLSNGIEQIEGKVYQMCGLVPCVVNMTNRLDISRFGYILINNKNDIEIARGHEFHYSKLKAVLEDTRKFKAVKKDGRTWECIFNEKNLYAGYPHIHFFGSYKFIEEVF.

The GATase cobBQ-type domain occupies 250–438 (IIAIAQDRAF…PHIHFFGSYK (189 aa)). Cys332 (nucleophile) is an active-site residue.

Belongs to the CobB/CbiA family. Requires Mg(2+) as cofactor.

The catalysed reaction is cob(II)yrinate + 2 L-glutamine + 2 ATP + 2 H2O = cob(II)yrinate a,c diamide + 2 L-glutamate + 2 ADP + 2 phosphate + 2 H(+). Its pathway is cofactor biosynthesis; adenosylcobalamin biosynthesis; cob(II)yrinate a,c-diamide from sirohydrochlorin (anaerobic route): step 10/10. In terms of biological role, catalyzes the ATP-dependent amidation of the two carboxylate groups at positions a and c of cobyrinate, using either L-glutamine or ammonia as the nitrogen source. The sequence is that of Cobyrinate a,c-diamide synthase from Fusobacterium nucleatum subsp. nucleatum (strain ATCC 25586 / DSM 15643 / BCRC 10681 / CIP 101130 / JCM 8532 / KCTC 2640 / LMG 13131 / VPI 4355).